The chain runs to 131 residues: Profilin-2 (131 aa).

Belongs to the profilin family. Occurs in many kinds of cells as a complex with monomeric actin in a 1:1 ratio. As to expression, expressed in vascular bundles of roots, hypocotyls, cotyledons, leaves, sepals, petals, stamen filaments and stalks of developing seeds. Expressed in leaf epidermal cells, trichomes and stem epidermal cells. Detected in phloem exudates (at protein level).

The protein resides in the cytoplasm. It is found in the cytoskeleton. It localises to the endoplasmic reticulum. The protein localises to the cytosol. Its subcellular location is the nucleus. Functionally, binds to actin monomers and regulates the organization of the actin cytoskeleton. At high concentrations, profilin prevents the polymerization of actin, whereas it enhances it at low concentrations. At low concentrations, associates with the poly-proline motif of formins to enhance actin filament elongation rate. Binds G-actin and poly-L-proline with low affinity in vitro. Binds ACT1, ACT7 and ACT11 and inhibits actin polymerization. May be involved in the cross-talk between vesicular trafficking and the actin cytoskeleton. Inhibits cell growth of various pathogenic fungal strains. May play a role as antifungal proteins in the defense system against fungal pathogen attacks. The protein is Profilin-2 of Arabidopsis thaliana (Mouse-ear cress).